We begin with the raw amino-acid sequence, 144 residues long: Putative pre-16S rRNA nuclease (144 aa).

This sequence belongs to the YqgF nuclease family.

The protein localises to the cytoplasm. Could be a nuclease involved in processing of the 5'-end of pre-16S rRNA. The chain is Putative pre-16S rRNA nuclease from Wigglesworthia glossinidia brevipalpis.